Reading from the N-terminus, the 275-residue chain is 3-oxo-isoapionate decarboxylase (275 aa).

It carries out the reaction 3-oxoisoapionate + H(+) = L-erythrulose + CO2. It functions in the pathway carbohydrate metabolism. Its function is as follows. Involved in catabolism of D-apiose. Catalyzes decarboxylation of 3-oxo-isoapionate to L-erythrulose. This Pectobacterium atrosepticum (strain SCRI 1043 / ATCC BAA-672) (Erwinia carotovora subsp. atroseptica) protein is 3-oxo-isoapionate decarboxylase.